Reading from the N-terminus, the 522-residue chain is MIRLYRPQRPPLRAPLRATPSLSLRWRVMLLAMSMVAMVVVLMAFAVYAVISAALYSDIDNQLQSRAQLLIASGSLAADPGKAIEGTAYSDVNAMLVNPGHAIYTAQQPGQTLPVGSPEKAVIHGELFMSRRTAGDQRILAVHLQNGTSLLISKSLKPTEAVMNKLRWVLLIVGGVGVAVAAVAGGMVTRAGLRPVARLTEAAERVARTDDLRPIPVFGSDELARLTESFNLMLRALAESRERQARLVTDAGHELRTPLTSLRTNVELLMASMEPGAPRLPEQEMVELRADVLAQIEELSTLVGDLVDLTRDDAGQVVHEPVDMSDVIDRSLERVRRRRNDIHFDVDVTPWQMYGDAAGLSRAVLNLLDNAAKWSPPGGHVGVTMRQLDPSHVELVVSDHGPGIPPQERRLVFERFYRSTSARAMPGSGLGLAIVKKVVLNHGGMLRVEDTVPGGQPPGTSFYVLLPGRSLPPAGHSTPAGESETDQAEAATDPAVPVAGDTANSRESANVISVDSQSARAR.

At 1–30 (MIRLYRPQRPPLRAPLRATPSLSLRWRVML) the chain is on the cytoplasmic side. Residues 31–51 (LAMSMVAMVVVLMAFAVYAVI) traverse the membrane as a helical segment. Over 52–167 (SAALYSDIDN…PTEAVMNKLR (116 aa)) the chain is Extracellular. Residues 168 to 188 (WVLLIVGGVGVAVAAVAGGMV) traverse the membrane as a helical segment. At 189-522 (TRAGLRPVAR…SVDSQSARAR (334 aa)) the chain is on the cytoplasmic side. The HAMP domain occupies 190–242 (RAGLRPVARLTEAAERVARTDDLRPIPVFGSDELARLTESFNLMLRALAESRE). The 221-residue stretch at 250-470 (DAGHELRTPL…SFYVLLPGRS (221 aa)) folds into the Histidine kinase domain. Histidine 253 carries the post-translational modification Phosphohistidine; by autocatalysis. The segment at 467-522 (PGRSLPPAGHSTPAGESETDQAEAATDPAVPVAGDTANSRESANVISVDSQSARAR) is disordered. Polar residues predominate over residues 502–522 (TANSRESANVISVDSQSARAR).

Requires Mg(2+) as cofactor. The cofactor is Mn(2+). Post-translationally, autophosphorylated.

It localises to the cell membrane. The catalysed reaction is ATP + protein L-histidine = ADP + protein N-phospho-L-histidine.. Functionally, member of the two-component regulatory system MprB/MprA which contributes to maintaining a balance among several systems involved in stress resistance and is required for establishment and maintenance of persistent infection in the host. In response to environmental signals MprB acts both as a membrane-associated protein kinase that undergoes autophosphorylation and subsequently transfers the phosphate to MprA, and a protein phosphatase that dephosphorylates phospho-MprA. This chain is Signal transduction histidine-protein kinase/phosphatase MprB (mprB), found in Mycolicibacterium paratuberculosis (strain ATCC BAA-968 / K-10) (Mycobacterium paratuberculosis).